Here is a 258-residue protein sequence, read N- to C-terminus: MTSFTGITAVANATNEMAMFKQAMKEVAAHPEWMSSRQIERQRWNPYSMEGGSTCAISGENFAIVASDTRMTQNDINILTRDAEKIQILNDNIILTTSGFYGDVLQLKKVLQSRLHKYRFDYRSDMSVDLCAELLSRNLYYRRFFPYYTGAILAGIDEHGKGAVFSYDPIGCIERLGYSASGAAEPMIIPFLDCQIGHVTLSEGYERPELTLDRAISLMKDSFRGAAEREISTGDKIHLVIAEAGKPVVVKFLPLRED.

Belongs to the peptidase T1B family. As to quaternary structure, the 26S proteasome consists of a 20S proteasome core and two 19S regulatory subunits. The 20S proteasome core is composed of 28 subunits that are arranged in four stacked rings, resulting in a barrel-shaped structure. The two end rings are each formed by seven alpha subunits, and the two central rings are each formed by seven beta subunits. The catalytic chamber with the active sites is on the inside of the barrel.

The protein resides in the cytoplasm. The protein localises to the nucleus. Functionally, non-catalytic component of the proteasome, a multicatalytic proteinase complex which is characterized by its ability to cleave peptides with Arg, Phe, Tyr, Leu, and Glu adjacent to the leaving group at neutral or slightly basic pH. The proteasome has an ATP-dependent proteolytic activity. In Caenorhabditis elegans, this protein is Proteasome subunit beta type-1 (pbs-6).